The primary structure comprises 764 residues: 1,4-alpha-glucan branching enzyme GlgB (764 aa).

D431 serves as the catalytic Nucleophile. Residue E484 is the Proton donor of the active site.

The protein belongs to the glycosyl hydrolase 13 family. GlgB subfamily. As to quaternary structure, monomer.

It carries out the reaction Transfers a segment of a (1-&gt;4)-alpha-D-glucan chain to a primary hydroxy group in a similar glucan chain.. Its pathway is glycan biosynthesis; glycogen biosynthesis. Catalyzes the formation of the alpha-1,6-glucosidic linkages in glycogen by scission of a 1,4-alpha-linked oligosaccharide from growing alpha-1,4-glucan chains and the subsequent attachment of the oligosaccharide to the alpha-1,6 position. This Synechococcus sp. (strain CC9902) protein is 1,4-alpha-glucan branching enzyme GlgB.